The chain runs to 100 residues: Large ribosomal subunit protein uL23 (100 aa).

The protein belongs to the universal ribosomal protein uL23 family. Part of the 50S ribosomal subunit. Contacts protein L29, and trigger factor when it is bound to the ribosome.

Functionally, one of the early assembly proteins it binds 23S rRNA. One of the proteins that surrounds the polypeptide exit tunnel on the outside of the ribosome. Forms the main docking site for trigger factor binding to the ribosome. The sequence is that of Large ribosomal subunit protein uL23 from Synechococcus sp. (strain CC9605).